A 362-amino-acid chain; its full sequence is Beta-ketoacyl-[acyl-carrier-protein] synthase III 2 (362 aa).

Catalysis depends on residues cysteine 113 and histidine 251. The segment at 252–256 (QANIR) is ACP-binding. Asparagine 281 is an active-site residue.

The protein belongs to the thiolase-like superfamily. FabH family. Homodimer.

It is found in the cytoplasm. It catalyses the reaction malonyl-[ACP] + acetyl-CoA + H(+) = 3-oxobutanoyl-[ACP] + CO2 + CoA. It participates in lipid metabolism; fatty acid biosynthesis. In terms of biological role, catalyzes the condensation reaction of fatty acid synthesis by the addition to an acyl acceptor of two carbons from malonyl-ACP. Catalyzes the first condensation reaction which initiates fatty acid synthesis and may therefore play a role in governing the total rate of fatty acid production. Possesses both acetoacetyl-ACP synthase and acetyl transacylase activities. Its substrate specificity determines the biosynthesis of branched-chain and/or straight-chain of fatty acids. The chain is Beta-ketoacyl-[acyl-carrier-protein] synthase III 2 from Vibrio vulnificus (strain YJ016).